A 283-amino-acid polypeptide reads, in one-letter code: Bifunctional protein FolD (283 aa).

Residues glycine 166–serine 168, serine 191, and isoleucine 232 contribute to the NADP(+) site.

Belongs to the tetrahydrofolate dehydrogenase/cyclohydrolase family. As to quaternary structure, homodimer.

The catalysed reaction is (6R)-5,10-methylene-5,6,7,8-tetrahydrofolate + NADP(+) = (6R)-5,10-methenyltetrahydrofolate + NADPH. It catalyses the reaction (6R)-5,10-methenyltetrahydrofolate + H2O = (6R)-10-formyltetrahydrofolate + H(+). Its pathway is one-carbon metabolism; tetrahydrofolate interconversion. Its function is as follows. Catalyzes the oxidation of 5,10-methylenetetrahydrofolate to 5,10-methenyltetrahydrofolate and then the hydrolysis of 5,10-methenyltetrahydrofolate to 10-formyltetrahydrofolate. The polypeptide is Bifunctional protein FolD (Chromobacterium violaceum (strain ATCC 12472 / DSM 30191 / JCM 1249 / CCUG 213 / NBRC 12614 / NCIMB 9131 / NCTC 9757 / MK)).